The primary structure comprises 71 residues: Conotoxin Bu23 (71 aa).

Residues 1 to 21 (MGMRMMVTVFLLGVLATTVVS) form the signal peptide. A propeptide spanning residues 22 to 37 (LRSNRASDGRRGIVNK) is cleaved from the precursor. The residue at position 70 (Asn70) is an Asparagine amide.

Belongs to the conotoxin A superfamily. Contains 3 disulfide bonds. They are not indicated here, since framework IV presents two different connectivities (I-V, II-III, IV-VI and I-III, II-V, IV-VI). Expressed by the venom duct.

It is found in the secreted. This chain is Conotoxin Bu23, found in Conus bullatus (Bubble cone).